A 761-amino-acid chain; its full sequence is Coenzyme PQQ synthesis protein F (761 aa).

Residue H49 coordinates Zn(2+). E52 serves as the catalytic Proton acceptor. The Zn(2+) site is built by H53 and E130.

It belongs to the peptidase M16 family. The cofactor is Zn(2+).

It functions in the pathway cofactor biosynthesis; pyrroloquinoline quinone biosynthesis. Functionally, required for coenzyme pyrroloquinoline quinone (PQQ) biosynthesis. It is thought that this protein is a protease that cleaves peptides bond in a small peptide (gene pqqA), providing the glutamate and tyrosine residues which are necessary for the synthesis of PQQ. This chain is Coenzyme PQQ synthesis protein F (pqqF), found in Klebsiella pneumoniae.